A 402-amino-acid polypeptide reads, in one-letter code: MEYQSGKRVLSLSLGLIGLFSASAFASDSRTVSEPKAPSSCTVLKADSSTATSTIQKALNNCGQGKAVKLSAGSSSVFLSGPLSLPSGVSLLIDKGVTLRAVNNAKSFENAPSSCGVVDTNGKGCDAFITATSTTNSGIYGPGTIDGQGGVKLQDKKVSWWDLAADAKVKKLKQNTPRLIQINKSKNFTLYNVSLINSPNFHVVFSDGDGFTAWKTTIKTPSTARNTDGIDPMSSKNITIAHSNISTGDDNVAIKAYKGRSETRNISILHNEFGTGHGMSIGSETMGVYNVTVDDLIMTGTTNGLRIKSDKSAAGVVNGVRYSNVVMKNVAKPIVIDTVYEKKEGSNVPDWSDITFKDITSQTKGVVVLNGENAKKPIEVTMKNVKLTSDSTWQIKNVTVKK.

The signal sequence occupies residues 1–23; sequence MEYQSGKRVLSLSLGLIGLFSAS. The Proton donor role is filled by D249. H277 is a catalytic residue.

It belongs to the glycosyl hydrolase 28 family. Monomer.

Its subcellular location is the secreted. It catalyses the reaction (1,4-alpha-D-galacturonosyl)n+m + H2O = (1,4-alpha-D-galacturonosyl)n + (1,4-alpha-D-galacturonosyl)m.. In terms of biological role, involved in maceration and soft-rotting of plant tissue. This Pectobacterium carotovorum subsp. carotovorum (Erwinia carotovora subsp. carotovora) protein is Endo-polygalacturonase (peh).